The chain runs to 1008 residues: ATP-dependent zinc metalloprotease FTSH 12, chloroplastic (1008 aa).

The transit peptide at 1–49 (MEIAISYKPNPLISSSTQLLKRSKSFGLVRFPAKYGLGATRKKQLFRVY) directs the protein to the chloroplast. The next 2 membrane-spanning stretches (helical) occupy residues 154 to 174 (AALFIYAFALLLSCQRVYVAI) and 427 to 447 (IHYFMKVFIALLPGILILWFI). 533 to 540 (GPPGTGKT) lines the ATP pocket. Zn(2+) is bound at residue H769. E770 is an active-site residue. Residues H773 and D849 each contribute to the Zn(2+) site.

This sequence in the N-terminal section; belongs to the AAA ATPase family. It in the C-terminal section; belongs to the peptidase M41 family. The cofactor is Zn(2+).

The protein localises to the plastid. It localises to the chloroplast thylakoid membrane. In terms of biological role, probable ATP-dependent zinc metallopeptidase. In Arabidopsis thaliana (Mouse-ear cress), this protein is ATP-dependent zinc metalloprotease FTSH 12, chloroplastic (FTSH12).